The sequence spans 297 residues: MRDRTHELRQGDDSSDEEDKERVALVVHPGTARLGSPDEEFFHKVRTIRQTIVKLGNKVQELEKQQVTILATPLPEESMKQELQNLRDEIKQLGREIRLQLKAIEPQKEEADENYNSVNTRMRKTQHGVLSQQFVELINKCNSMQSEYREKNVERIRRQLKITNAGMVSDEELEQMLDSGQSEVFVSNILKDTQVTRQALNEISARHSEIQQLERSIRELHDIFTFLATEVEMQGEMINRIEKNILSSADYVERGQEHVKTALENQKKARKKKVLIAICVSITVVLLAVIIGVTVVG.

The segment covering 1 to 12 (MRDRTHELRQGD) has biased composition (basic and acidic residues). The segment at 1–21 (MRDRTHELRQGDDSSDEEDKE) is disordered. At 1–275 (MRDRTHELRQ…QKKARKKKVL (275 aa)) the chain is on the cytoplasmic side. 2 positions are modified to phosphoserine: S14 and S15. T31 carries the phosphothreonine modification. 4 positions are modified to phosphoserine: S36, S117, S208, and S248. Positions 43-163 (HKVRTIRQTI…ERIRRQLKIT (121 aa)) form a coiled coil. Positions 154 to 297 (ERIRRQLKIT…AVIIGVTVVG (144 aa)) are interaction with CENPF. The region spanning 200–262 (LNEISARHSE…ERGQEHVKTA (63 aa)) is the t-SNARE coiled-coil homology domain. The chain crosses the membrane as a helical; Anchor for type IV membrane protein span at residues 276 to 296 (IAICVSITVVLLAVIIGVTVV). Residue G297 is a topological domain, extracellular.

Belongs to the syntaxin family. Component of the SNARE complex composed of STX4, SNAP23 and VAMP7 that interacts with SYT7 during lysosomal exocytosis. Found in a complex with VAMP8 and SNAP23. Detected in a complex with SNAP23 and STXBP4. Interacts with VAMP2. Interacts with SNAP23 and SNAPIN. Interacts with LLGL1. Interacts (via C-terminus) with CENPF. Interacts with DOC2B. Interacts with STXBP6. Interacts with STXBP3; excludes interaction with DOC2B and SNAP25. Interacts with STXBP4; excludes interaction with VAMP2. Interacts with STXBP5L. Expressed in neutrophils and neutrophil-differentiated HL-60 cells. Expression in neutrophils increases with differentiation.

The protein localises to the cell membrane. Its subcellular location is the cell projection. It is found in the neuron projection. It localises to the stereocilium. Functionally, plasma membrane t-SNARE that mediates docking of transport vesicles. Necessary for the translocation of SLC2A4 from intracellular vesicles to the plasma membrane. In neurons, recruited at neurite tips to membrane domains rich in the phospholipid 1-oleoyl-2-palmitoyl-PC (OPPC) which promotes neurite tip surface expression of the dopamine transporter SLC6A3/DAT by facilitating fusion of SLC6A3-containing transport vesicles with the plasma membrane. Together with STXB3 and VAMP2, may also play a role in docking/fusion of intracellular GLUT4-containing vesicles with the cell surface in adipocytes and in docking of synaptic vesicles at presynaptic active zones. Required for normal hearing. This Homo sapiens (Human) protein is Syntaxin-4 (STX4).